The following is a 65-amino-acid chain: Lantipeptide Flvbeta.h (65 aa).

The propeptide at Met1–Gly27 is cleaved by FlvT. Position 28 is a 2,3-didehydrobutyrine; by FlvM2 (Thr28). Residues Ser29–Cys33 constitute a cross-link (lanthionine (Ser-Cys); by FlvM2). Ser30 carries the 2,3-didehydroalanine (Ser); by FlvM2 modification. Thr44 bears the 2,3-didehydrobutyrine; by FlvM2 mark. A cross-link (beta-methyllanthionine (Thr-Cys); by FlvM2) is located at residues Thr48–Cys54. The segment at residues Ser56–Cys59 is a cross-link (lanthionine (Ser-Cys); by FlvM2). Positions Thr60–Cys63 form a cross-link, beta-methyllanthionine (Thr-Cys); by FlvM2.

Contains LL-lanthionine, DL-lanthionine, and DL-beta-methyllanthionine, when coepressed in E.coli with the flavecin synthetase FlvM2.

It localises to the secreted. In terms of biological role, lanthionine-containing peptide that does probably not show antibacterial activity, since its analog [+2]Flvbeta.h does not show antibacterial activity against M.luteus. Also does not show antibiotic activity when tested with [Del2]Flvalpha.a, an analog of Flvalpha.a, which is encoded by the same operon than Flvbeta.h. The bactericidal activity of lantibiotics is based on depolarization of energized bacterial cytoplasmic membranes, initiated by the formation of aqueous transmembrane pores. The chain is Lantipeptide Flvbeta.h from Ruminococcus flavefaciens.